Consider the following 850-residue polypeptide: Trimethylamine-N-oxide reductase (850 aa).

A signal peptide (tat-type signal) is located at residues 1–39 (MKNKDSLHVSRRRFLAQLGGLTVAGMLGPSLLTPRSARA). Mo-bis(molybdopterin guanine dinucleotide) is bound at residue Ser-191.

This sequence belongs to the prokaryotic molybdopterin-containing oxidoreductase family. Mo-bis(molybdopterin guanine dinucleotide) is required as a cofactor. In terms of processing, predicted to be exported by the Tat system. The position of the signal peptide cleavage has not been experimentally proven.

The protein resides in the periplasm. The catalysed reaction is trimethylamine + 2 Fe(III)-[cytochrome c] + H2O = trimethylamine N-oxide + 2 Fe(II)-[cytochrome c] + 3 H(+). Its function is as follows. Reduces trimethylamine-N-oxide (TMAO) into trimethylamine; an anaerobic reaction coupled to energy-yielding reactions. The chain is Trimethylamine-N-oxide reductase (torA) from Salmonella typhi.